The primary structure comprises 201 residues: Large ribosomal subunit protein uL4 (201 aa).

A disordered region spans residues 44–68; the sequence is KAQKTRSEVAGTTKKSKKQKGGGAR.

It belongs to the universal ribosomal protein uL4 family. Part of the 50S ribosomal subunit.

One of the primary rRNA binding proteins, this protein initially binds near the 5'-end of the 23S rRNA. It is important during the early stages of 50S assembly. It makes multiple contacts with different domains of the 23S rRNA in the assembled 50S subunit and ribosome. Functionally, forms part of the polypeptide exit tunnel. The chain is Large ribosomal subunit protein uL4 from Xanthomonas campestris pv. campestris (strain 8004).